The primary structure comprises 313 residues: Ribonuclease HIII (313 aa).

The disordered stretch occupies residues 63–85; the sequence is ARWGTAEPQEKKKTAKKPADPRY. Positions 70 to 82 are enriched in basic and acidic residues; it reads PQEKKKTAKKPAD. The RNase H type-2 domain occupies 94–310; the sequence is MSVIGSDEVG…TQKAQRLADK (217 aa). Residues Asp-100, Glu-101, and Asp-205 each coordinate a divalent metal cation.

It belongs to the RNase HII family. RnhC subfamily. In terms of assembly, interacts with the RNA polymerase core. Requires Mn(2+) as cofactor. Mg(2+) serves as cofactor.

Its subcellular location is the cytoplasm. It catalyses the reaction Endonucleolytic cleavage to 5'-phosphomonoester.. In terms of biological role, endonuclease that specifically degrades the RNA of RNA-DNA hybrids. This Bacillus subtilis (strain 168) protein is Ribonuclease HIII (rnhC).